A 358-amino-acid polypeptide reads, in one-letter code: Methylthioribose-1-phosphate isomerase (358 aa).

Substrate contacts are provided by residues 54 to 56 (RGA), R96, and Q205. Catalysis depends on D246, which acts as the Proton donor. 256–257 (NK) lines the substrate pocket.

This sequence belongs to the eIF-2B alpha/beta/delta subunits family. MtnA subfamily.

It carries out the reaction 5-(methylsulfanyl)-alpha-D-ribose 1-phosphate = 5-(methylsulfanyl)-D-ribulose 1-phosphate. The protein operates within amino-acid biosynthesis; L-methionine biosynthesis via salvage pathway; L-methionine from S-methyl-5-thio-alpha-D-ribose 1-phosphate: step 1/6. Functionally, catalyzes the interconversion of methylthioribose-1-phosphate (MTR-1-P) into methylthioribulose-1-phosphate (MTRu-1-P). The polypeptide is Methylthioribose-1-phosphate isomerase (Ectopseudomonas mendocina (strain ymp) (Pseudomonas mendocina)).